The chain runs to 774 residues: Phosphoribosylformylglycinamidine synthase subunit PurL (774 aa).

The active site involves H51. Positions 54 and 93 each coordinate ATP. Residue E95 coordinates Mg(2+). Substrate is bound by residues 96-99 (SHNH) and R118. H97 (proton acceptor) is an active-site residue. D119 contributes to the Mg(2+) binding site. Q242 provides a ligand contact to substrate. Residue D270 coordinates Mg(2+). A substrate-binding site is contributed by 314–316 (ESQ). ATP is bound by residues D514 and G551. N552 serves as a coordination point for Mg(2+). Residue S554 coordinates substrate.

This sequence belongs to the FGAMS family. As to quaternary structure, monomer. Part of the FGAM synthase complex composed of 1 PurL, 1 PurQ and 2 PurS subunits.

It localises to the cytoplasm. It carries out the reaction N(2)-formyl-N(1)-(5-phospho-beta-D-ribosyl)glycinamide + L-glutamine + ATP + H2O = 2-formamido-N(1)-(5-O-phospho-beta-D-ribosyl)acetamidine + L-glutamate + ADP + phosphate + H(+). Its pathway is purine metabolism; IMP biosynthesis via de novo pathway; 5-amino-1-(5-phospho-D-ribosyl)imidazole from N(2)-formyl-N(1)-(5-phospho-D-ribosyl)glycinamide: step 1/2. Its function is as follows. Part of the phosphoribosylformylglycinamidine synthase complex involved in the purines biosynthetic pathway. Catalyzes the ATP-dependent conversion of formylglycinamide ribonucleotide (FGAR) and glutamine to yield formylglycinamidine ribonucleotide (FGAM) and glutamate. The FGAM synthase complex is composed of three subunits. PurQ produces an ammonia molecule by converting glutamine to glutamate. PurL transfers the ammonia molecule to FGAR to form FGAM in an ATP-dependent manner. PurS interacts with PurQ and PurL and is thought to assist in the transfer of the ammonia molecule from PurQ to PurL. This is Phosphoribosylformylglycinamidine synthase subunit PurL from Gloeobacter violaceus (strain ATCC 29082 / PCC 7421).